The chain runs to 1061 residues: NACHT, LRR and PYD domains-containing protein 12 (1061 aa).

A Pyrin domain is found at 1–95; the sequence is MLRTAGRDGL…WERGQREDLV (95 aa). Residues 129–201 enclose the FISNA domain; it reads YRDYVRRKFR…SPIKIETLFE (73 aa). Residues 211–528 form the NACHT domain; it reads RTVVMQGAAG…EFFAAMYYIL (318 aa). 217–224 serves as a coordination point for ATP; it reads GAAGIGKS. LRR repeat units follow at residues 828–848, 857–878, 885–906, 914–935, 942–962, 971–992, 999–1020, and 1028–1049; these read HLVE…RLLC, RLRT…ELAS, SLRE…LLCE, KLQT…GLSV, NLRE…WLLA, RLQK…NLYF, TLTD…LLCK, and KLRV…RLAA.

Belongs to the NLRP family. Interacts (via pyrin domain) with ASC. Interacts (via pyrin domain) with FAF1 (via UBA domain). Interacts with MAP3K14; this interaction promotes proteasomal degradation of MAP3K14. Interacts with NOD2; this interaction promotes degradation of NOD2 through the ubiquitin-proteasome pathway. Interacts with HSPA1A and HSPA8. Interacts with HSP90AA1. Interacts with TRIM25; this interaction inhibits RIGI-mediated signaling pathway. In terms of tissue distribution, detected only in peripheral blood leukocytes, predominantly in eosinophils and granulocytes, and at lower levels in monocytes.

The protein localises to the cytoplasm. Its function is as follows. Plays an essential role as an potent mitigator of inflammation. Primarily expressed in dendritic cells and macrophages, inhibits both canonical and non-canonical NF-kappa-B and ERK activation pathways. Functions as a negative regulator of NOD2 by targeting it to degradation via the proteasome pathway. In turn, promotes bacterial tolerance. Also inhibits the RIGI-mediated immune signaling against RNA viruses by reducing the E3 ubiquitin ligase TRIM25-mediated 'Lys-63'-linked RIGI activation but enhancing the E3 ubiquitin ligase RNF125-mediated 'Lys-48'-linked RIGI degradation. Also acts as a negative regulator of inflammatory response to mitigate obesity and obesity-associated diseases in adipose tissue. In Homo sapiens (Human), this protein is NACHT, LRR and PYD domains-containing protein 12 (NLRP12).